We begin with the raw amino-acid sequence, 332 residues long: Geranylgeranyl pyrophosphate synthase dpasD (332 aa).

Residues Lys55, Arg58, and His87 each coordinate isopentenyl diphosphate. Positions 94 and 98 each coordinate Mg(2+). Arg103 is a binding site for dimethylallyl diphosphate. Position 104 (Arg104) interacts with isopentenyl diphosphate. Dimethylallyl diphosphate contacts are provided by Lys181, Thr182, and Gln215. Asp218 lines the Mg(2+) pocket. Dimethylallyl diphosphate-binding residues include Asn222, Lys232, and Lys242.

This sequence belongs to the FPP/GGPP synthase family. Mg(2+) serves as cofactor.

It carries out the reaction isopentenyl diphosphate + dimethylallyl diphosphate = (2E)-geranyl diphosphate + diphosphate. It catalyses the reaction isopentenyl diphosphate + (2E)-geranyl diphosphate = (2E,6E)-farnesyl diphosphate + diphosphate. The catalysed reaction is isopentenyl diphosphate + (2E,6E)-farnesyl diphosphate = (2E,6E,10E)-geranylgeranyl diphosphate + diphosphate. It functions in the pathway secondary metabolite biosynthesis; terpenoid biosynthesis. Geranylgeranyl pyrophosphate synthase; part of the gene cluster that mediates the biosynthesis of the diterpenoid pyrones subglutinols A and B. The first step of the pathway is the synthesis of the alpha-pyrone moiety by the polyketide synthase dpasA via condensation of one acetyl-CoA starter unit with 3 malonyl-CoA units and 2 methylations. The alpha-pyrone is then combined with geranylgeranyl pyrophosphate (GGPP) formed by the GGPP synthase dpasD through the action of the prenyltransferase dpasC to yield a linear alpha-pyrone diterpenoid. Subsequent steps in the diterpenoid pyrone biosynthetic pathway involve the decalin core formation, which is initiated by the epoxidation of the C10-C11 olefin by the FAD-dependent oxidoreductase dpasE, and is followed by a cyclization cascade catalyzed by the terpene cyclase dpasB. The FAD-linked oxidoreductase dpasF is then involved in tetrahydrofuran (THF) ring formation at the C5 unit to complete the formation of subglutinols A and B. DpasF also possesses an additional catalytic ability of multi-step oxidations to generate a new DDP analog with an enone system at the C5 named FDDP A. This Apiospora sacchari (Arthrinium sacchari) protein is Geranylgeranyl pyrophosphate synthase dpasD.